A 183-amino-acid polypeptide reads, in one-letter code: Pyruvoyl-dependent arginine decarboxylase 2 (183 aa).

A Pyruvic acid (Ser) modification is found at Ser41.

The protein belongs to the PdaD family. Requires pyruvate as cofactor.

The enzyme catalyses L-arginine + H(+) = agmatine + CO2. In Methanosarcina mazei (strain ATCC BAA-159 / DSM 3647 / Goe1 / Go1 / JCM 11833 / OCM 88) (Methanosarcina frisia), this protein is Pyruvoyl-dependent arginine decarboxylase 2 (pdaD2).